We begin with the raw amino-acid sequence, 587 residues long: Sulfite reductase [NADPH] hemoprotein beta-component (587 aa).

Positions 1 to 13 (MQSTDNDLSQSPP) are enriched in polar residues. The tract at residues 1–20 (MQSTDNDLSQSPPKLSADEQ) is disordered. Residues Cys-439, Cys-445, Cys-484, and Cys-488 each coordinate [4Fe-4S] cluster. Position 488 (Cys-488) interacts with siroheme.

It belongs to the nitrite and sulfite reductase 4Fe-4S domain family. In terms of assembly, alpha(8)-beta(8). The alpha component is a flavoprotein, the beta component is a hemoprotein. Siroheme is required as a cofactor. It depends on [4Fe-4S] cluster as a cofactor.

The catalysed reaction is hydrogen sulfide + 3 NADP(+) + 3 H2O = sulfite + 3 NADPH + 4 H(+). It participates in sulfur metabolism; hydrogen sulfide biosynthesis; hydrogen sulfide from sulfite (NADPH route): step 1/1. Its function is as follows. Component of the sulfite reductase complex that catalyzes the 6-electron reduction of sulfite to sulfide. This is one of several activities required for the biosynthesis of L-cysteine from sulfate. In Bordetella petrii (strain ATCC BAA-461 / DSM 12804 / CCUG 43448), this protein is Sulfite reductase [NADPH] hemoprotein beta-component.